The following is a 241-amino-acid chain: Type III pantothenate kinase (241 aa).

An ATP-binding site is contributed by 6 to 13 (DVGNTRIK). Residue 94-97 (GIDR) participates in substrate binding. The Proton acceptor role is filled by Asp96. Asp117 is a binding site for K(+). Residue Thr120 coordinates ATP. Thr172 contacts substrate.

The protein belongs to the type III pantothenate kinase family. As to quaternary structure, homodimer. NH4(+) is required as a cofactor. It depends on K(+) as a cofactor.

It is found in the cytoplasm. It carries out the reaction (R)-pantothenate + ATP = (R)-4'-phosphopantothenate + ADP + H(+). It functions in the pathway cofactor biosynthesis; coenzyme A biosynthesis; CoA from (R)-pantothenate: step 1/5. Its function is as follows. Catalyzes the phosphorylation of pantothenate (Pan), the first step in CoA biosynthesis. This is Type III pantothenate kinase from Flavobacterium psychrophilum (strain ATCC 49511 / DSM 21280 / CIP 103535 / JIP02/86).